A 457-amino-acid chain; its full sequence is 6-phosphofructo-2-kinase/fructose-2,6-bisphosphatase (457 aa).

Residues 1 to 20 (MEIPPGLETTKRKVAHSDEH) form a disordered region. Positions 1–244 (MEIPPGLETT…VYFLMNIHLL (244 aa)) are 6-phosphofructo-2-kinase. Residues 9–20 (TTKRKVAHSDEH) show a composition bias toward basic and acidic residues. Residue 36–44 (GLPARGKTY) participates in ATP binding. Residues R69 and R98 each coordinate beta-D-fructose 6-phosphate. Residue D124 is part of the active site. Residues T126 and R132 each contribute to the beta-D-fructose 6-phosphate site. The active site involves C154. 163 to 168 (NVTDVK) contacts ATP. Residues K168, R190, and Y194 each coordinate beta-D-fructose 6-phosphate. Positions 245 to 457 (PRSIYLTRHG…QLPLCDSPRD (213 aa)) are fructose-2,6-bisphosphatase. R252 contributes to the beta-D-fructose 2,6-bisphosphate binding site. H253 acts as the Tele-phosphohistidine intermediate in catalysis. Residues N259 and G265 each contribute to the beta-D-fructose 2,6-bisphosphate site. E324 functions as the Proton donor/acceptor in the catalytic mechanism. Y335, R349, K353, Y364, Q390, and R394 together coordinate beta-D-fructose 2,6-bisphosphate. 346–349 (ADDR) serves as a coordination point for ATP. ATP is bound by residues 390–394 (QAVLR) and Y426.

This sequence in the C-terminal section; belongs to the phosphoglycerate mutase family.

It catalyses the reaction beta-D-fructose 2,6-bisphosphate + H2O = beta-D-fructose 6-phosphate + phosphate. The catalysed reaction is beta-D-fructose 6-phosphate + ATP = beta-D-fructose 2,6-bisphosphate + ADP + H(+). Functionally, synthesis and degradation of fructose 2,6-bisphosphate. This is 6-phosphofructo-2-kinase/fructose-2,6-bisphosphatase from Caenorhabditis elegans.